A 1025-amino-acid chain; its full sequence is Multidrug resistance protein MdtC (1025 aa).

Helical transmembrane passes span 3-23 (FFALFIYRPVATILIAVAITL), 333-353 (EVEQTLVISIALVILVVFLFL), 360-380 (LIPAVAVPVSLIGTFAAMYLC), 387-407 (LSLMALTIATGFVVDDAIVVL), 431-451 (VGFTVLSMSVSLVAVFLPLLL), 463-483 (FAVTLSVAIGISLVISLTLTP), 528-548 (IVGLVLVGTIALNVWMYITIP), 853-873 (VILILAAIATVYIVLGILYES), 875-895 (VHPLTILSTLPSAGVGALLAL), 897-917 (LFDAPFSLIALIGIMLLIGIV), 953-973 (PIMMTTLAALFGALPLVISSG), and 984-1004 (ITIVGGLAMSQLLTLYTTPVV).

Belongs to the resistance-nodulation-cell division (RND) (TC 2.A.6) family. MdtC subfamily. Part of a tripartite efflux system composed of MdtA, MdtB and MdtC. MdtC forms a heteromultimer with MdtB.

Its subcellular location is the cell inner membrane. In Enterobacter sp. (strain 638), this protein is Multidrug resistance protein MdtC.